We begin with the raw amino-acid sequence, 352 residues long: Photosystem II D2 protein (352 aa).

Topologically, residues 1–31 (MTIAIGRAPAERGWFDILDDWLKRDRFVFVG) are cytoplasmic. Residues 32–53 (WSGILLFPCAYLALGGWLTGTT) traverse the membrane as a helical segment. Over 54 to 108 (FVTSWYTHGLASSYLEGCNFLTVAVSTPANSMGHSLLLLWGPEAQGDFTRWCQLG) the chain is Lumenal. Residues 109–131 (GLWTFIALHGAFGLIGFMLRQFE) form a helical membrane-spanning segment. Histidine 117 is a chlorophyll a binding site. Glutamine 129 serves as a coordination point for pheophytin a. The Cytoplasmic portion of the chain corresponds to 132-140 (IARLVGVRP). A helical transmembrane segment spans residues 141–160 (YNAIAFSAPIAVFVSVFLIY). Asparagine 142 provides a ligand contact to pheophytin a. Residues 161–193 (PLGQSSWFFAPSFGVAAIFRFLLFFQGFHNWTL) lie on the Lumenal side of the membrane. The chain crosses the membrane as a helical span at residues 194 to 217 (NPFHMMGVAGVLGGALLCAIHGAT). A chlorophyll a-binding site is contributed by histidine 197. A plastoquinone-binding residues include histidine 214 and phenylalanine 261. Residue histidine 214 participates in Fe cation binding. Topologically, residues 218–265 (VENTLFQDGEGASTFRAFNPTQAEETYSMVTANRFWSQIFGIAFSNKR) are cytoplasmic. Residues 266–288 (WLHFFMLFVPVTGLWMSAIGVVG) form a helical membrane-spanning segment. Histidine 268 provides a ligand contact to Fe cation. Over 289–352 (LALNLRSYDF…EEVLPRGNAL (64 aa)) the chain is Lumenal.

Belongs to the reaction center PufL/M/PsbA/D family. In terms of assembly, PSII is composed of 1 copy each of membrane proteins PsbA, PsbB, PsbC, PsbD, PsbE, PsbF, PsbH, PsbI, PsbJ, PsbK, PsbL, PsbM, PsbT, PsbX, PsbY, PsbZ, Psb30/Ycf12, peripheral proteins PsbO, CyanoQ (PsbQ), PsbU, PsbV and a large number of cofactors. It forms dimeric complexes. Part of a photosystem II (PSII) assembly intermediate complex PSII-I; crystallized from a strain deleted of psbJ, it forms monomeric PSII before addition of the oxygen evolving complex. PSII-I includes 3 assembly factors not found in mature PSII (Psb27, Psb28 and Psb34). Requires The D1/D2 heterodimer binds P680, chlorophylls that are the primary electron donor of PSII, and subsequent electron acceptors. It shares a non-heme iron and each subunit binds pheophytin, quinone, additional chlorophylls, carotenoids and lipids. There is also a Cl(-1) ion associated with D1 and D2, which is required for oxygen evolution. PSII binds additional chlorophylls, carotenoids and specific lipids. as cofactor.

The protein localises to the cellular thylakoid membrane. It carries out the reaction 2 a plastoquinone + 4 hnu + 2 H2O = 2 a plastoquinol + O2. Its function is as follows. Photosystem II (PSII) is a light-driven water:plastoquinone oxidoreductase that uses light energy to abstract electrons from H(2)O, generating O(2) and a proton gradient subsequently used for ATP formation. It consists of a core antenna complex that captures photons, and an electron transfer chain that converts photonic excitation into a charge separation. The D1/D2 (PsbA/PsbD) reaction center heterodimer binds P680, the primary electron donor of PSII as well as several subsequent electron acceptors. D2 is needed for assembly of a stable PSII complex. The polypeptide is Photosystem II D2 protein (Thermosynechococcus vestitus (strain NIES-2133 / IAM M-273 / BP-1)).